The chain runs to 481 residues: Probable Xaa-Pro aminopeptidase PEPP (481 aa).

Aspartate 265, aspartate 276, glutamate 399, and glutamate 439 together coordinate Mn(2+).

It belongs to the peptidase M24B family. Mn(2+) serves as cofactor.

It carries out the reaction Release of any N-terminal amino acid, including proline, that is linked to proline, even from a dipeptide or tripeptide.. Functionally, catalyzes the removal of a penultimate prolyl residue from the N-termini of peptides. In Uncinocarpus reesii (strain UAMH 1704), this protein is Probable Xaa-Pro aminopeptidase PEPP (PEPP).